Reading from the N-terminus, the 221-residue chain is ATP phosphoribosyltransferase (221 aa).

This sequence belongs to the ATP phosphoribosyltransferase family. Short subfamily. As to quaternary structure, heteromultimer composed of HisG and HisZ subunits.

It localises to the cytoplasm. It carries out the reaction 1-(5-phospho-beta-D-ribosyl)-ATP + diphosphate = 5-phospho-alpha-D-ribose 1-diphosphate + ATP. The protein operates within amino-acid biosynthesis; L-histidine biosynthesis; L-histidine from 5-phospho-alpha-D-ribose 1-diphosphate: step 1/9. In terms of biological role, catalyzes the condensation of ATP and 5-phosphoribose 1-diphosphate to form N'-(5'-phosphoribosyl)-ATP (PR-ATP). Has a crucial role in the pathway because the rate of histidine biosynthesis seems to be controlled primarily by regulation of HisG enzymatic activity. This is ATP phosphoribosyltransferase from Neisseria gonorrhoeae (strain ATCC 700825 / FA 1090).